Reading from the N-terminus, the 62-residue chain is Lepidopteran-selective toxin (62 aa).

The first 24 residues, 1 to 24, serve as a signal peptide directing secretion; it reads MKFLYGVILIALFLTVMTATLSEA. Disulfide bonds link Cys-26-Cys-43, Cys-29-Cys-51, Cys-40-Cys-56, and Cys-44-Cys-58. Residue Tyr-62 is a propeptide.

Belongs to the short scorpion toxin superfamily. Chloride channel inhibitor family. In terms of tissue distribution, expressed by the venom gland.

It is found in the secreted. Functionally, toxin with unknown function in healthy organisms. On glioma cells, interacts with chloride channels (probably ClC-3/CLCN3) and MMP2 at the surface of glioma cells. This complex is then internalized via caveolae, thus inhibiting the chloride channels necessary for cell shrinkage and tumor propagation. Induces flaccid paralysis in H.virescens larvae. Is not toxic to S.falculata larvae or mice. This is Lepidopteran-selective toxin from Hottentotta tamulus (Eastern Indian scorpion).